We begin with the raw amino-acid sequence, 286 residues long: Merozoite surface protein 2 (286 aa).

Positions 1–20 (MKVIKTLSIINFFIFVTFNI) are cleaved as a signal peptide. Asn22 and Asn36 each carry an N-linked (GlcNAc...) asparagine glycan. Positions 43–248 (MTESKTPTPT…SQKECTDGNK (206 aa)) are disordered. Residues 44–212 (TESKTPTPTG…EQTESPELQS (169 aa)) form a polymorphic region region. Over residues 54–68 (AGAGASGSAGSGDGA) the composition is skewed to gly residues. Residues 59–68 (SGSAGSGDGA) form repeat 1. A 5 X 10 AA tandem repeats of S-G-S-A-[GS]-[GS]-[AD]-G-A region spans residues 59–106 (SGSAGSGDGASGSASGSASGSASGSAGASGSASGSAGASGSASGSAGA). One copy of the 2; partial repeat lies at 69 to 76 (SGSASGSA). Residues 69-137 (SGSASGSASG…STSTSSENPN (69 aa)) show a composition bias toward low complexity. Repeat copies occupy residues 77 to 86 (SGSASGSAGA), 88 to 96 (GSASGSAGA), and 97 to 106 (SGSASGSAGA). Composition is skewed to polar residues over residues 153–179 (KPNQ…NVPP) and 186–214 (KSPT…QSAP). Asn163 is a glycosylation site (N-linked (GlcNAc...) asparagine). The N-linked (GlcNAc...) asparagine glycan is linked to Asn235. Basic and acidic residues predominate over residues 239–248 (SQKECTDGNK). Residues Cys243 and Cys251 are joined by a disulfide bond. 2 N-linked (GlcNAc...) asparagine glycosylation sites follow: Asn259 and Asn260. The GPI-anchor amidated asparagine moiety is linked to residue Asn260. The propeptide at 261-286 (SSNIASINKFVVLISATLVLSFAIFI) is removed in mature form.

The protein resides in the cell membrane. Functionally, may play a role in the merozoite attachment to the erythrocyte. The polypeptide is Merozoite surface protein 2 (Plasmodium falciparum (isolate 311)).